The sequence spans 280 residues: Manganese transport system membrane protein MntC (280 aa).

9 helical membrane-spanning segments follow: residues 16–36 (ALIT…FIIL), 41–61 (LMGD…YMMG), 62–82 (MNFF…IGFV), 92–112 (TAIG…ISFA), 137–157 (TIII…EFLV), 168–188 (YGLN…LVTV), 193–213 (TVGI…AYLL), 221–241 (IVLA…FSYI), and 244–264 (LASG…AFLF).

This sequence belongs to the ABC-3 integral membrane protein family.

It is found in the cell membrane. Its function is as follows. This protein is probably a component of a manganese permease, a binding protein-dependent, ATP-driven transport system. The chain is Manganese transport system membrane protein MntC (mntC) from Listeria monocytogenes serovar 1/2a (strain ATCC BAA-679 / EGD-e).